We begin with the raw amino-acid sequence, 93 residues long: Uteroglobin (93 aa).

Positions 1 to 17 (MKLAITIILVMLSVCYS) are cleaved as a signal peptide.

Belongs to the secretoglobin family. As to quaternary structure, antiparallel homodimer; disulfide-linked. Interaction with LMBR1L is controversial.

It is found in the secreted. Its function is as follows. Binds phosphatidylcholine, phosphatidylinositol, polychlorinated biphenyls (PCB) and weakly progesterone, potent inhibitor of phospholipase A2. The chain is Uteroglobin (SCGB1A1) from Neotomodon alstoni (Mexican volcano mouse).